A 109-amino-acid chain; its full sequence is Period circadian protein (109 aa).

Residues 29–100 are disordered; it reads ITAPVDVDPH…TGTSSGSVQL (72 aa). Low complexity predominate over residues 69–97; sequence SGNFNSGSNLHIGSITNTSNTGTGTSSGS.

As to quaternary structure, forms a heterodimer with timeless (TIM); the complex then translocates into the nucleus. Post-translationally, phosphorylated with a circadian rhythmicity, probably by the double-time protein (dbt). Phosphorylation could be implicated in the stability of per monomer and in the formation of heterodimer per-tim.

The protein resides in the nucleus. Its subcellular location is the cytoplasm. It localises to the perinuclear region. Functionally, essential for biological clock functions. Determines the period length of circadian and ultradian rhythms; an increase in PER dosage leads to shortened circadian rhythms and a decrease leads to lengthened circadian rhythms. Essential for the circadian rhythmicity of locomotor activity, eclosion behavior, and for the rhythmic component of the male courtship song that originates in the thoracic nervous system. The biological cycle depends on the rhythmic formation and nuclear localization of the TIM-PER complex. Light induces the degradation of TIM, which promotes elimination of PER. Nuclear activity of the heterodimer coordinatively regulates PER and TIM transcription through a negative feedback loop. Behaves as a negative element in circadian transcriptional loop. Does not appear to bind DNA, suggesting indirect transcriptional inhibition. This Loxocera albiseta (Rust fly) protein is Period circadian protein (per).